A 365-amino-acid chain; its full sequence is Protein RecA (365 aa).

73-80 (GPESSGKT) contributes to the ATP binding site.

Belongs to the RecA family.

Its subcellular location is the cytoplasm. Its function is as follows. Can catalyze the hydrolysis of ATP in the presence of single-stranded DNA, the ATP-dependent uptake of single-stranded DNA by duplex DNA, and the ATP-dependent hybridization of homologous single-stranded DNAs. It interacts with LexA causing its activation and leading to its autocatalytic cleavage. This Prochlorococcus marinus (strain MIT 9312) protein is Protein RecA.